The sequence spans 287 residues: Acetylglutamate kinase (287 aa).

Residues 70–71 (GG), arginine 92, and asparagine 184 contribute to the substrate site.

Belongs to the acetylglutamate kinase family. ArgB subfamily.

It localises to the cytoplasm. The enzyme catalyses N-acetyl-L-glutamate + ATP = N-acetyl-L-glutamyl 5-phosphate + ADP. It functions in the pathway amino-acid biosynthesis; L-arginine biosynthesis; N(2)-acetyl-L-ornithine from L-glutamate: step 2/4. Catalyzes the ATP-dependent phosphorylation of N-acetyl-L-glutamate. The sequence is that of Acetylglutamate kinase from Roseobacter denitrificans (strain ATCC 33942 / OCh 114) (Erythrobacter sp. (strain OCh 114)).